The following is a 100-amino-acid chain: uncharacterized protein (100 aa).

The N-terminal stretch at M1–G17 is a signal peptide. C18 is lipidated: N-palmitoyl cysteine. A lipid anchor (S-diacylglycerol cysteine) is attached at C18.

It localises to the cell membrane. This is an uncharacterized protein from Salmonella paratyphi A (strain ATCC 9150 / SARB42).